We begin with the raw amino-acid sequence, 97 residues long: SAGA-associated factor 11 (97 aa).

The SGF11-type zinc-finger motif lies at 70–91 (IECNVCGREVSGNRFAAHLVRC).

It belongs to the SGF11 family. Component of the 1.8 MDa SAGA transcription coactivator-HAT complex. SAGA is built of 5 distinct domains with specialized functions. Within the SAGA complex, SUS1, SGF11, SGF73 and UBP8 form an additional subcomplex of SAGA called the DUB module (deubiquitination module). Interacts directly with SGF73, SUS1 and UBP8.

It localises to the nucleus. Functions as a component of the transcription regulatory histone acetylation (HAT) complex SAGA. At the promoters, SAGA is required for recruitment of the basal transcription machinery. It influences RNA polymerase II transcriptional activity through different activities such as TBP interaction and promoter selectivity, interaction with transcription activators, and chromatin modification through histone acetylation and deubiquitination. SAGA acetylates nucleosomal histone H3 to some extent (to form H3K9ac, H3K14ac, H3K18ac and H3K23ac). SAGA interacts with DNA via upstream activating sequences (UASs). Involved in transcriptional regulation of a subset of SAGA-regulated genes. Within the SAGA complex, participates in a subcomplex, that specifically deubiquitinates histones H2B. The polypeptide is SAGA-associated factor 11 (Kluyveromyces lactis (strain ATCC 8585 / CBS 2359 / DSM 70799 / NBRC 1267 / NRRL Y-1140 / WM37) (Yeast)).